The following is a 218-amino-acid chain: LHFPL tetraspan subfamily member 3 protein (218 aa).

Helical transmembrane passes span 22 to 42 (IGVL…VCFI), 96 to 116 (FFIG…GLFF), 126 to 146 (ICAW…MIFP), and 177 to 197 (ILAI…FVLG).

This sequence belongs to the LHFP family.

Its subcellular location is the membrane. The polypeptide is LHFPL tetraspan subfamily member 3 protein (Xenopus laevis (African clawed frog)).